Consider the following 517-residue polypeptide: Ribonuclease Y (517 aa).

Residues 1–21 traverse the membrane as a helical segment; it reads MIEVLIGLGAGVAGVGAGYLY. Residues 207–273 enclose the KH domain; that stretch reads LINVVNIKND…TRVIELLVED (67 aa). Residues 333–426 form the HD domain; the sequence is ALAHSLEVAH…VCAADCLSAA (94 aa).

This sequence belongs to the RNase Y family.

It is found in the cell membrane. Endoribonuclease that initiates mRNA decay. The chain is Ribonuclease Y from Campylobacter curvus (strain 525.92).